A 479-amino-acid chain; its full sequence is 6-phosphogluconate dehydrogenase, decarboxylating (479 aa).

Residues Gly-9 to Gly-14, Asn-32 to Thr-34, Val-77 to Ala-79, and Asn-105 contribute to the NADP(+) site. Substrate-binding positions include Asn-105 and Ser-131 to Gly-133. Lys-186 serves as the catalytic Proton acceptor. Residue His-189–Asn-190 coordinates substrate. The active-site Proton donor is Glu-193. Tyr-194, Lys-263, Arg-290, Arg-454, and His-460 together coordinate substrate.

The protein belongs to the 6-phosphogluconate dehydrogenase family. In terms of assembly, homodimer.

It catalyses the reaction 6-phospho-D-gluconate + NADP(+) = D-ribulose 5-phosphate + CO2 + NADPH. The protein operates within carbohydrate degradation; pentose phosphate pathway; D-ribulose 5-phosphate from D-glucose 6-phosphate (oxidative stage): step 3/3. Catalyzes the oxidative decarboxylation of 6-phosphogluconate to ribulose 5-phosphate and CO(2), with concomitant reduction of NADP to NADPH. The sequence is that of 6-phosphogluconate dehydrogenase, decarboxylating (GND) from Trypanosoma brucei brucei.